We begin with the raw amino-acid sequence, 192 residues long: uncharacterized protein (192 aa).

The 132-residue stretch at 29–160 (QRQAAVLIPV…PLDVYRRGNS (132 aa)) folds into the Nudix hydrolase domain. The Nudix box motif lies at 67 to 89 (GAVDSTDASLIAAALREAQEEVA). Residues E83 and E87 each coordinate Mg(2+).

This sequence belongs to the Nudix hydrolase family. PCD1 subfamily. Mn(2+) serves as cofactor. Requires Mg(2+) as cofactor.

Functionally, probably mediates the hydrolysis of some nucleoside diphosphate derivatives. This is an uncharacterized protein from Salmonella newport (strain SL254).